Here is a 426-residue protein sequence, read N- to C-terminus: Glutamate-1-semialdehyde 2,1-aminomutase (426 aa).

N6-(pyridoxal phosphate)lysine is present on K265.

The protein belongs to the class-III pyridoxal-phosphate-dependent aminotransferase family. HemL subfamily. Homodimer. It depends on pyridoxal 5'-phosphate as a cofactor.

The protein resides in the cytoplasm. It catalyses the reaction (S)-4-amino-5-oxopentanoate = 5-aminolevulinate. It participates in porphyrin-containing compound metabolism; protoporphyrin-IX biosynthesis; 5-aminolevulinate from L-glutamyl-tRNA(Glu): step 2/2. This is Glutamate-1-semialdehyde 2,1-aminomutase from Yersinia pseudotuberculosis serotype O:1b (strain IP 31758).